We begin with the raw amino-acid sequence, 217 residues long: Protein LURP-one-related 15 (217 aa).

N-acetylmethionine is present on Met1.

The protein belongs to the LOR family.

Might be related to the phospholipid scramblase and tubby-like superfamily of membrane tethered transcription factors. The protein is Protein LURP-one-related 15 of Arabidopsis thaliana (Mouse-ear cress).